Consider the following 401-residue polypeptide: Multidrug resistance protein MdtA (401 aa).

Positions methionine 1–alanine 20 are cleaved as a signal peptide.

This sequence belongs to the membrane fusion protein (MFP) (TC 8.A.1) family. As to quaternary structure, part of a tripartite efflux system composed of MdtA, MdtB and MdtC.

The protein localises to the cell inner membrane. In Photorhabdus laumondii subsp. laumondii (strain DSM 15139 / CIP 105565 / TT01) (Photorhabdus luminescens subsp. laumondii), this protein is Multidrug resistance protein MdtA.